We begin with the raw amino-acid sequence, 115 residues long: Nitrogenase-stabilizing/protective protein NifW (115 aa).

Belongs to the NifW family. As to quaternary structure, homotrimer; associates with NifD.

Functionally, may protect the nitrogenase Fe-Mo protein from oxidative damage. In Methylobacterium sp. (strain 4-46), this protein is Nitrogenase-stabilizing/protective protein NifW.